The following is a 312-amino-acid chain: Lipid-translocating exporter-like protein RTA1 (312 aa).

The disordered stretch occupies residues 1-21 (MSPESKKITAHGSTSMPLSRT). Residues 11–21 (HGSTSMPLSRT) are compositionally biased toward polar residues. The next 6 helical transmembrane spans lie at 29 to 49 (IPLT…FFLA), 61 to 81 (LSTM…YFIC), 103 to 123 (FITF…LLAG), 142 to 162 (AMIT…SFHV), 183 to 203 (FMMV…RSAY), and 223 to 243 (SLML…ILPI). N-linked (GlcNAc...) asparagine glycans are attached at residues asparagine 258 and asparagine 304.

The protein belongs to the lipid-translocating exporter (LTE) (TC 9.A.26.1) family.

The protein resides in the membrane. It participates in siderophore biosynthesis. Functionally, lipid-translocating exporter-like protein; part of the gene cluster that mediates the biosynthesis of hydroxamate-containing siderophores that play a critical role in virulence via intracellular iron acquisition during macrophage infection. This is Lipid-translocating exporter-like protein RTA1 from Ajellomyces capsulatus (Darling's disease fungus).